Here is a 313-residue protein sequence, read N- to C-terminus: Glutaminase (313 aa).

Positions 64, 116, 163, 170, 194, 246, and 264 each coordinate substrate.

The protein belongs to the glutaminase family. As to quaternary structure, homotetramer.

The catalysed reaction is L-glutamine + H2O = L-glutamate + NH4(+). The sequence is that of Glutaminase from Exiguobacterium sp. (strain ATCC BAA-1283 / AT1b).